A 122-amino-acid polypeptide reads, in one-letter code: Photosystem II extrinsic protein U (122 aa).

Residues 1–26 (MKTIVRLFAILMVLISSVGFVGSAVA) form the signal peptide.

The protein belongs to the PsbU family. In terms of assembly, PSII is composed of 1 copy each of membrane proteins PsbA, PsbB, PsbC, PsbD, PsbE, PsbF, PsbH, PsbI, PsbJ, PsbK, PsbL, PsbM, PsbT, PsbX, PsbY, PsbZ, Psb30/Ycf12, peripheral proteins PsbO, CyanoQ (PsbQ), PsbU, PsbV and a large number of cofactors. It forms dimeric complexes.

The protein resides in the cellular thylakoid membrane. In terms of biological role, one of the extrinsic, lumenal subunits of photosystem II (PSII). PSII is a light-driven water plastoquinone oxidoreductase, using light energy to abstract electrons from H(2)O, generating a proton gradient subsequently used for ATP formation. The extrinsic proteins stabilize the structure of photosystem II oxygen-evolving complex (OEC), the ion environment of oxygen evolution and protect the OEC against heat-induced inactivation. This chain is Photosystem II extrinsic protein U, found in Crocosphaera subtropica (strain ATCC 51142 / BH68) (Cyanothece sp. (strain ATCC 51142)).